The chain runs to 140 residues: Nucleoside diphosphate kinase (140 aa).

ATP-binding residues include K11, F59, R87, T93, R104, and N114. The Pros-phosphohistidine intermediate role is filled by H117.

Belongs to the NDK family. In terms of assembly, homotetramer. It depends on Mg(2+) as a cofactor.

The protein resides in the cytoplasm. It carries out the reaction a 2'-deoxyribonucleoside 5'-diphosphate + ATP = a 2'-deoxyribonucleoside 5'-triphosphate + ADP. The enzyme catalyses a ribonucleoside 5'-diphosphate + ATP = a ribonucleoside 5'-triphosphate + ADP. In terms of biological role, major role in the synthesis of nucleoside triphosphates other than ATP. The ATP gamma phosphate is transferred to the NDP beta phosphate via a ping-pong mechanism, using a phosphorylated active-site intermediate. This chain is Nucleoside diphosphate kinase, found in Rhodovulum sulfidophilum (Rhodobacter sulfidophilus).